The sequence spans 472 residues: F420-non-reducing hydrogenase subunit A (472 aa).

C61, C64, C442, and C445 together coordinate Ni(2+).

It belongs to the [NiFe]/[NiFeSe] hydrogenase large subunit family. In terms of assembly, the F420-non-reducing hydrogenase is composed of three subunits; MvhA, MvhD and MvhG. It forms a complex with the heterodisulfide reductase (hdr). It depends on Ni(2+) as a cofactor.

Its function is as follows. Part of a complex that provides reducing equivalents for heterodisulfide reductase. The sequence is that of F420-non-reducing hydrogenase subunit A (mvhA) from Methanothermobacter thermautotrophicus (strain ATCC 29096 / DSM 1053 / JCM 10044 / NBRC 100330 / Delta H) (Methanobacterium thermoautotrophicum).